The primary structure comprises 101 residues: Phosphoprotein OPG062 (101 aa).

The segment at 51 to 73 is disordered; the sequence is PSSPACERRPSSPSRCERMNNPR. Residues S53 and S62 each carry the phosphoserine modification. The segment covering 56 to 70 has biased composition (basic and acidic residues); it reads CERRPSSPSRCERMN.

This sequence belongs to the orthopoxvirus OPG062 family. As to quaternary structure, self-associates to form high molecular-weight forms. Interacts with protein OPG157/A30. Interacts with host RICTOR and RPTOR; these interactions disrupt the mTORC1 and mTORC2 crosstalk. In terms of processing, phosphorylated on two serines. While these phosphorylations do not play a role in virion assembly; they are essential for the interaction with host RICTOR and RPTOR.

Its subcellular location is the virion. Functionally, plays an essential role in virion assembly and morphogenesis. Also plays a role in the inhibition of host immune response by dysregulating mTOR. Sequesters host RICTOR and RPTOR, thereby disrupting mTORC1 and mTORC2 crosstalk. In turn, blocks the host antiviral response in part through mTOR-dependent degradation of cGAS, the primary poxvirus sensor. The sequence is that of Phosphoprotein OPG062 (OPG062) from Vaccinia virus (strain Western Reserve) (VACV).